The primary structure comprises 690 residues: uncharacterized protein (690 aa).

The tract at residues 553-601 (DESELLENEDKSESLENEDKSESLENEDKSESLENEDKSESLENEKKEK) is disordered. A compositionally biased stretch (basic and acidic residues) spans 560–601 (NEDKSESLENEDKSESLENEDKSESLENEDKSESLENEKKEK).

This sequence belongs to the glycosyltransferase 2 family.

This is an uncharacterized protein from Rickettsia bellii (strain RML369-C).